Reading from the N-terminus, the 206-residue chain is Large ribosomal subunit protein uL4 (206 aa).

Residues 63-97 (MYKQKGTGRARHHSARAPQFRGGGKAHGPVVRSHE) form a disordered region. Basic residues predominate over residues 64 to 77 (YKQKGTGRARHHSA).

The protein belongs to the universal ribosomal protein uL4 family. Part of the 50S ribosomal subunit.

Functionally, one of the primary rRNA binding proteins, this protein initially binds near the 5'-end of the 23S rRNA. It is important during the early stages of 50S assembly. It makes multiple contacts with different domains of the 23S rRNA in the assembled 50S subunit and ribosome. Forms part of the polypeptide exit tunnel. This Rhizobium etli (strain ATCC 51251 / DSM 11541 / JCM 21823 / NBRC 15573 / CFN 42) protein is Large ribosomal subunit protein uL4.